The following is a 505-amino-acid chain: Glutamate--tRNA ligase (505 aa).

The 'HIGH' region motif lies at 12–22 (PSPTGDPHVGT). The 'KMSKS' region motif lies at 253-257 (KLSKR). An ATP-binding site is contributed by K256.

This sequence belongs to the class-I aminoacyl-tRNA synthetase family. Glutamate--tRNA ligase type 1 subfamily. In terms of assembly, monomer.

It localises to the cytoplasm. The enzyme catalyses tRNA(Glu) + L-glutamate + ATP = L-glutamyl-tRNA(Glu) + AMP + diphosphate. In terms of biological role, catalyzes the attachment of glutamate to tRNA(Glu) in a two-step reaction: glutamate is first activated by ATP to form Glu-AMP and then transferred to the acceptor end of tRNA(Glu). This Chlamydophila psittaci (strain ATCC VR-125 / 6BC) (Chlamydia psittaci) protein is Glutamate--tRNA ligase.